Consider the following 296-residue polypeptide: Ribose import binding protein RbsB (296 aa).

A signal peptide spans 1–25; the sequence is MNMKKLATLVSAVALSATVSANAMA.

The protein belongs to the bacterial solute-binding protein 2 family. As to quaternary structure, the complex is composed of an ATP-binding protein (RbsA), two transmembrane proteins (RbsC) and a solute-binding protein (RbsB).

The protein resides in the periplasm. Functionally, part of the ABC transporter complex RbsABC involved in ribose import. Binds ribose. The sequence is that of Ribose import binding protein RbsB (rbsB) from Salmonella typhi.